Consider the following 227-residue polypeptide: MAGLLKESMRIKMYMEGTVNGHYFKCEGEGDGNPFTGTQSMRIHVTEGAPLPFAFDILAPCCEYGSRTFVHHTAEIPDFFKQSFPEGFTWERTTTYEDGGILTAHQDTSLEGNCLIYKVKVLGTNFPADGPVMKNKSGGWEPCTEVVYPENGVLCGRNVMALKVGDRRLICHLYTSYRSKKAVRALTMPGFHFTDIRLQMPRKKKDEYFELYEASVARYSDLPEKAN.

The 2-iminomethyl-5-imidazolinone (Glu-Gly) cross-link spans 63–65 (EYG). Tyrosine 64 bears the 2,3-didehydrotyrosine mark.

It belongs to the GFP family. In terms of assembly, homotetramer. Contains a chromophore consisting of modified amino acid residues. The chromophore is formed by autocatalytic backbone condensation between Xaa-N and Gly-(N+2), oxidation of Tyr-(N+1) to didehydrotyrosine, and formation of a double bond to the alpha-amino nitrogen of residue Xaa-N. Maturation of the chromophore requires nothing other than molecular oxygen. The precise stereochemistry of the tyrosine has not been determined.

Non-fluorescent pigment protein that is lilac in color. This is GFP-like non-fluorescent chromoprotein from Radianthus crispa (Leathery sea anemone).